Here is a 635-residue protein sequence, read N- to C-terminus: PTS system mannitol-specific EIICBA component (635 aa).

In terms of domain architecture, PTS EIIC type-2 spans 12-342 (FGRFLSNMVM…LFKTSKVKER (331 aa)). A run of 6 helical transmembrane segments spans residues 24–45 (IGAF…WLPN), 50–70 (KLVG…TGGK), 134–155 (SAGI…PAVE), 165–185 (VNFM…EPAK), 273–292 (VILG…GGLV), and 313–334 (FANI…AVLF). One can recognise a PTS EIIB type-2 domain in the interval 378–473 (RKIIVACDAG…RLVAAQRHID (96 aa)). The active-site Phosphocysteine intermediate; for EIIB activity is the C384. Position 384 is a phosphocysteine; by EIIA (C384). Residues 494-635 (FQLGADNIFL…VDEVLALLNK (142 aa)) form the PTS EIIA type-2 domain. Residue H554 is the Tele-phosphohistidine intermediate; for EIIA activity of the active site. Phosphohistidine; by HPr is present on H554.

Homodimer. An intramolecular phosphotransfer takes places between His-554 and Cys-384.

The protein resides in the cell inner membrane. It catalyses the reaction D-mannitol(out) + N(pros)-phospho-L-histidyl-[protein] = D-mannitol 1-phosphate(in) + L-histidyl-[protein]. The phosphoenolpyruvate-dependent sugar phosphotransferase system (sugar PTS), a major carbohydrate active transport system, catalyzes the phosphorylation of incoming sugar substrates concomitantly with their translocation across the cell membrane. This system is involved in D-mannitol transport. This is PTS system mannitol-specific EIICBA component from Klebsiella pneumoniae.